Reading from the N-terminus, the 252-residue chain is Sulfate transporter CysZ (252 aa).

The next 5 helical transmembrane spans lie at F29 to F49, F66 to F86, L141 to L160, V164 to F186, and A212 to V232.

Belongs to the CysZ family.

It localises to the cell inner membrane. Its function is as follows. High affinity, high specificity proton-dependent sulfate transporter, which mediates sulfate uptake. Provides the sulfur source for the cysteine synthesis pathway. The chain is Sulfate transporter CysZ from Vibrio atlanticus (strain LGP32) (Vibrio splendidus (strain Mel32)).